We begin with the raw amino-acid sequence, 727 residues long: NHL repeat-containing protein 2 (727 aa).

The Thioredoxin domain occupies 43–198; that stretch reads RERDLTVPEL…TLKFYKERGQ (156 aa). 6 NHL repeats span residues 207-249, 260-302, 330-364, 404-434, 456-500, and 513-557; these read KLYK…TLKN, NSGR…IDLE, ISSP…VWAL, FAQP…VRMI, AFGD…VDPK, and ASNV…LDLE.

In terms of assembly, monomer.

The protein localises to the cytoplasm. The protein resides in the cytosol. In terms of biological role, required for normal embryonic development. The sequence is that of NHL repeat-containing protein 2 (NHLRC2) from Gallus gallus (Chicken).